A 326-amino-acid chain; its full sequence is HTH-type transcriptional regulator BlaA (326 aa).

Residues 1–59 enclose the HTH lysR-type domain; it reads MDVVNACRAFVKVSERGSFTVGAAAAQMSQSVASRRVAALEKHFGERLFDRASRRPSLT. Residues 19-38 constitute a DNA-binding region (H-T-H motif); that stretch reads FTVGAAAAQMSQSVASRRVA. The tract at residues 289-326 is disordered; the sequence is TADHGPDPATGAGPGADAGTEPGARAEPGAPEEGAQAC. A compositionally biased stretch (low complexity) spans 295 to 326; the sequence is DPATGAGPGADAGTEPGARAEPGAPEEGAQAC.

The protein belongs to the LysR transcriptional regulatory family.

In terms of biological role, positive regulator of the expression of the gene (blaB) for beta-lactamase. It binds to the blaL-blaA intercistronic region. This Streptomyces cacaoi protein is HTH-type transcriptional regulator BlaA (blaA).